The primary structure comprises 270 residues: MLSLWAIGLLGLLNQVEALWSPSSYQSPAQQRSAQFSSSGWGTSPAAQNPWSFNRPMPNTNMPNMNTGSLPGSMPGAMPGSMPGAMPGSMPGAMPGSMPGSMPGSMPNAMPGAMPGGTGSGFMAGAMPGAMPNMRSSNNMMGNMRNGYPPSYMTPSPRNTICVAPVSQPRLCMVNGENTHKYRLKDVIEFLGHPNIEKVPKCVPGVPRVNCADYYAAQYIWKRGYCYCKNFHSNLPSYQMGSTQIRCVLNNCGACSQEFYVDKQRVVKCE.

Residues 1-18 (MLSLWAIGLLGLLNQVEA) form the signal peptide. Polar residues predominate over residues 31–52 (QRSAQFSSSGWGTSPAAQNPWS). Positions 31-95 (QRSAQFSSSG…MPGSMPGAMP (65 aa)) are disordered. Positions 56–95 (PMPNTNMPNMNTGSLPGSMPGAMPGSMPGAMPGSMPGAMP) are enriched in low complexity.

In terms of tissue distribution, component of the acid-soluble organic matrix of calcified layers of the shell (at protein level).

The protein localises to the secreted. The polypeptide is Methionine-rich protein (Lottia gigantea (Giant owl limpet)).